Reading from the N-terminus, the 354-residue chain is Protein-arginine kinase (354 aa).

In terms of domain architecture, Phosphagen kinase C-terminal spans 24 to 254 (IVLSSRIRLA…QQIIQQEKMA (231 aa)). ATP contacts are provided by residues 27-31 (SSRIR), H92, R125, 176-180 (RASVM), and 207-212 (RGIYGE). Positions 337 to 342 (RDYRRA) match the RDXXRA motif of the pArg binding pocket involved in allosteric regulation motif.

Belongs to the ATP:guanido phosphotransferase family.

It carries out the reaction L-arginyl-[protein] + ATP = N(omega)-phospho-L-arginyl-[protein] + ADP + H(+). Its activity is regulated as follows. Appears to be allosterically activated by the binding of pArg-containing polypeptides to the pArg-binding pocket localized in the C-terminal domain of McsB. Functionally, catalyzes the specific phosphorylation of arginine residues in a large number of proteins. Is part of the bacterial stress response system. Protein arginine phosphorylation has a physiologically important role and is involved in the regulation of many critical cellular processes, such as protein homeostasis, motility, competence, and stringent and stress responses, by regulating gene expression and protein activity. This Bacillus cereus (strain ATCC 10987 / NRS 248) protein is Protein-arginine kinase.